The sequence spans 171 residues: Neuronal vesicle trafficking-associated protein 2 (171 aa).

The disordered stretch occupies residues 1–21 (MVKLNSNPSEKGAKPPSVEDG). Residues 1 to 71 (MVKLNSNPSE…FRVPKIAEFT (71 aa)) lie on the Cytoplasmic side of the membrane. A helical; Signal-anchor for type II membrane protein transmembrane segment spans residues 72–92 (VTILVSLALAFLACIVFLVVY). Residues 93–171 (KAFTYDHSCP…EPKPPKTQGH (79 aa)) lie on the Lumenal side of the membrane.

It belongs to the NSG family.

The protein resides in the membrane. The protein localises to the golgi apparatus. Its subcellular location is the trans-Golgi network membrane. It is found in the cell projection. It localises to the dendrite. The protein resides in the endosome membrane. The protein localises to the early endosome membrane. Its subcellular location is the late endosome membrane. It is found in the lysosome lumen. It localises to the cytoplasmic vesicle membrane. The protein resides in the golgi stack membrane. The protein localises to the endosome. Its subcellular location is the multivesicular body membrane. This Bos taurus (Bovine) protein is Neuronal vesicle trafficking-associated protein 2.